A 257-amino-acid chain; its full sequence is Imidazole glycerol phosphate synthase subunit HisF (257 aa).

Residues D11 and D130 contribute to the active site.

The protein belongs to the HisA/HisF family. Heterodimer of HisH and HisF.

The protein localises to the cytoplasm. It carries out the reaction 5-[(5-phospho-1-deoxy-D-ribulos-1-ylimino)methylamino]-1-(5-phospho-beta-D-ribosyl)imidazole-4-carboxamide + L-glutamine = D-erythro-1-(imidazol-4-yl)glycerol 3-phosphate + 5-amino-1-(5-phospho-beta-D-ribosyl)imidazole-4-carboxamide + L-glutamate + H(+). It participates in amino-acid biosynthesis; L-histidine biosynthesis; L-histidine from 5-phospho-alpha-D-ribose 1-diphosphate: step 5/9. IGPS catalyzes the conversion of PRFAR and glutamine to IGP, AICAR and glutamate. The HisF subunit catalyzes the cyclization activity that produces IGP and AICAR from PRFAR using the ammonia provided by the HisH subunit. This chain is Imidazole glycerol phosphate synthase subunit HisF, found in Trichormus variabilis (strain ATCC 29413 / PCC 7937) (Anabaena variabilis).